Reading from the N-terminus, the 307-residue chain is RHOMBOID-like protein 6, mitochondrial (307 aa).

The N-terminal 62 residues, 1 to 62 (MRSRDMERGR…DCVAKLLRRF (62 aa)), are a transit peptide targeting the mitochondrion. Transmembrane regions (helical) follow at residues 105 to 125 (WLHA…IFGI), 136 to 156 (IGLI…LFLQ), 159 to 179 (ISVG…SELL), 191 to 211 (ALLS…LPWV), 214 to 234 (FAHI…LMQP), and 262 to 282 (LFFV…VMLF). Catalysis depends on Ser164, which acts as the Nucleophile. His216 (charge relay system) is an active-site residue.

This sequence belongs to the peptidase S54 family.

Its subcellular location is the mitochondrion membrane. It catalyses the reaction Cleaves type-1 transmembrane domains using a catalytic dyad composed of serine and histidine that are contributed by different transmembrane domains.. In terms of biological role, probable rhomboid-type serine protease that catalyzes intramembrane proteolysis. Might be involved in response to abiotic stimuli. The protein is RHOMBOID-like protein 6, mitochondrial of Arabidopsis thaliana (Mouse-ear cress).